The primary structure comprises 333 residues: Adenosine deaminase (333 aa).

Zn(2+) is bound by residues histidine 12 and histidine 14. 3 residues coordinate substrate: histidine 14, aspartate 16, and glycine 170. Residue histidine 197 coordinates Zn(2+). The active-site Proton donor is the glutamate 200. Position 278 (aspartate 278) interacts with Zn(2+). Aspartate 279 lines the substrate pocket.

The protein belongs to the metallo-dependent hydrolases superfamily. Adenosine and AMP deaminases family. Adenosine deaminase subfamily. Zn(2+) is required as a cofactor.

It catalyses the reaction adenosine + H2O + H(+) = inosine + NH4(+). The enzyme catalyses 2'-deoxyadenosine + H2O + H(+) = 2'-deoxyinosine + NH4(+). Functionally, catalyzes the hydrolytic deamination of adenosine and 2-deoxyadenosine. In Salmonella dublin (strain CT_02021853), this protein is Adenosine deaminase.